The following is a 351-amino-acid chain: Ion-translocating oxidoreductase complex subunit D (351 aa).

Helical transmembrane passes span 20–40, 44–64, 89–109, and 123–143; these read IMLW…YFFG, LIQV…TLSL, LPPL…IIIA, and PAMI…TSWL. An FMN phosphoryl threonine modification is found at T187. 5 consecutive transmembrane segments (helical) span residues 215 to 235, 244 to 264, 267 to 287, 301 to 321, and 322 to 342; these read LSGI…LFLL, IPVS…IIAP, FAQP…FFIA, LIFG…GGYP, and DGVA…DYYT.

This sequence belongs to the NqrB/RnfD family. As to quaternary structure, the complex is composed of six subunits: RnfA, RnfB, RnfC, RnfD, RnfE and RnfG. FMN serves as cofactor.

Its subcellular location is the cell inner membrane. In terms of biological role, part of a membrane-bound complex that couples electron transfer with translocation of ions across the membrane. This is Ion-translocating oxidoreductase complex subunit D from Pectobacterium atrosepticum (strain SCRI 1043 / ATCC BAA-672) (Erwinia carotovora subsp. atroseptica).